Here is a 163-residue protein sequence, read N- to C-terminus: Nucleotide-binding protein SACE_6882 (163 aa).

This sequence belongs to the YajQ family.

Functionally, nucleotide-binding protein. The polypeptide is Nucleotide-binding protein SACE_6882 (Saccharopolyspora erythraea (strain ATCC 11635 / DSM 40517 / JCM 4748 / NBRC 13426 / NCIMB 8594 / NRRL 2338)).